A 183-amino-acid chain; its full sequence is Proton-transporting V-type ATPase complex assembly regulator TMEM9 (183 aa).

The N-terminal stretch at 1–20 (MKLLCLVAVVGCLLVPPAQA) is a signal peptide. 3 N-linked (GlcNAc...) asparagine glycosylation sites follow: Asn21, Asn38, and Asn47. The Extracellular portion of the chain corresponds to 21–89 (NKSSEDIRCK…YEERSTTTIK (69 aa)). Residues 90 to 110 (VIIVIYLSVVGALLLYMAFLM) form a helical membrane-spanning segment. The Cytoplasmic segment spans residues 111 to 183 (LVDPLIRKPD…TVFDRHKMLS (73 aa)). Phosphoserine is present on Ser144.

It belongs to the TMEM9 family. Interacts with the v-ATPase accessory protein ATP6AP2 and with the v-ATPase complex subunit ATP6V0D1; these interactions lead to the assembly of the v-ATPase complex. In terms of processing, N-glycosylated. Expressed in heart, lung, kidney, liver and intestines. Enriched in the hepatocytes around the central vein.

The protein resides in the lysosome membrane. It localises to the late endosome membrane. The protein localises to the endosome. Its subcellular location is the multivesicular body membrane. In terms of biological role, transmembrane protein that binds to and facilitates the assembly of lysosomal proton-transporting V-type ATPase (v-ATPase), resulting in enhanced lysosomal acidification and trafficking. By bringing the v-ATPase accessory protein ATP6AP2 and the v-ATPase subunit ATP6V0D1 together, allows v-ATPase complex formation and activation. TMEM9-controlled vesicular acidification induces hyperactivation of Wnt/beta-catenin signaling, involved in development, tissue homeostasis and tissue regeneration, through lysosomal degradation of adenomatous polyposis coli/APC. In the liver, involved in hepatic regeneration. The chain is Proton-transporting V-type ATPase complex assembly regulator TMEM9 from Mus musculus (Mouse).